The following is a 221-amino-acid chain: Response regulator protein PmrA (221 aa).

One can recognise a Response regulatory domain in the interval 2–116 (RILLAEDDLL…ELQARVRALT (115 aa)). Asp-51 is subject to 4-aspartylphosphate. Positions 124 to 218 (LPQLVHGELR…VRGIGYGIDQ (95 aa)) form a DNA-binding region, ompR/PhoB-type.

The protein resides in the cytoplasm. In terms of biological role, member of the two-component regulatory system PmrA/PmrB that plays a role in the regulation of resistance towards polymyxin B and cationic antimicrobial peptides in response to limiting concentrations of Mg(2+). Functions as a transcriptional activator by direct binding to a cis-acting sequence upstream of the target gene promoters including lipase lipA and pmrH promoters. Also autoregulates its own pmrAB operon under Mg(2+)-limiting conditions. The sequence is that of Response regulator protein PmrA (pmrA) from Pseudomonas aeruginosa (strain ATCC 15692 / DSM 22644 / CIP 104116 / JCM 14847 / LMG 12228 / 1C / PRS 101 / PAO1).